Consider the following 195-residue polypeptide: ATP-dependent Clp protease proteolytic subunit (195 aa).

Ser98 acts as the Nucleophile in catalysis. Residue His123 is part of the active site.

Belongs to the peptidase S14 family. As to quaternary structure, fourteen ClpP subunits assemble into 2 heptameric rings which stack back to back to give a disk-like structure with a central cavity, resembling the structure of eukaryotic proteasomes.

It localises to the cytoplasm. It carries out the reaction Hydrolysis of proteins to small peptides in the presence of ATP and magnesium. alpha-casein is the usual test substrate. In the absence of ATP, only oligopeptides shorter than five residues are hydrolyzed (such as succinyl-Leu-Tyr-|-NHMec, and Leu-Tyr-Leu-|-Tyr-Trp, in which cleavage of the -Tyr-|-Leu- and -Tyr-|-Trp bonds also occurs).. Cleaves peptides in various proteins in a process that requires ATP hydrolysis. Has a chymotrypsin-like activity. Plays a major role in the degradation of misfolded proteins. The sequence is that of ATP-dependent Clp protease proteolytic subunit from Staphylococcus haemolyticus (strain JCSC1435).